A 431-amino-acid chain; its full sequence is Glycerol-3-phosphate dehydrogenase [NAD(P)+] (431 aa).

NADPH is bound by residues serine 79, phenylalanine 80, arginine 100, and lysine 173. Lysine 173 and glycine 201 together coordinate sn-glycerol 3-phosphate. Position 205 (alanine 205) interacts with NADPH. Sn-glycerol 3-phosphate is bound by residues lysine 256, aspartate 309, serine 319, arginine 320, and asparagine 321. Lysine 256 serves as the catalytic Proton acceptor. Arginine 320 is an NADPH binding site. Residue glutamate 346 participates in NADPH binding.

It belongs to the NAD-dependent glycerol-3-phosphate dehydrogenase family.

The protein localises to the cytoplasm. It carries out the reaction sn-glycerol 3-phosphate + NAD(+) = dihydroxyacetone phosphate + NADH + H(+). It catalyses the reaction sn-glycerol 3-phosphate + NADP(+) = dihydroxyacetone phosphate + NADPH + H(+). It functions in the pathway membrane lipid metabolism; glycerophospholipid metabolism. In terms of biological role, catalyzes the reduction of the glycolytic intermediate dihydroxyacetone phosphate (DHAP) to sn-glycerol 3-phosphate (G3P), the key precursor for phospholipid synthesis. In Psychrobacter cryohalolentis (strain ATCC BAA-1226 / DSM 17306 / VKM B-2378 / K5), this protein is Glycerol-3-phosphate dehydrogenase [NAD(P)+].